Here is a 249-residue protein sequence, read N- to C-terminus: ATP synthase subunit a (249 aa).

5 consecutive transmembrane segments (helical) span residues 33-53 (GQVFLTSWFVIAALVVLSLLA), 92-112 (VPFIGTLFLFIFLSNWSGALI), 131-151 (INTTVALALLTSLAYFYAGFS), 196-216 (LVVAVLVLLVPLFVPLPAMIL), and 217-237 (GLFTSAIQALIFATLAASYIG).

The protein belongs to the ATPase A chain family. As to quaternary structure, F-type ATPases have 2 components, CF(1) - the catalytic core - and CF(0) - the membrane proton channel. CF(1) has five subunits: alpha(3), beta(3), gamma(1), delta(1), epsilon(1). CF(0) has four main subunits: a, b, b' and c.

The protein resides in the cellular thylakoid membrane. Its function is as follows. Key component of the proton channel; it plays a direct role in the translocation of protons across the membrane. This is ATP synthase subunit a from Synechococcus elongatus (strain ATCC 33912 / PCC 7942 / FACHB-805) (Anacystis nidulans R2).